The chain runs to 104 residues: Thioredoxin (104 aa).

One can recognise a Thioredoxin domain in the interval A2–L104. A disulfide bridge connects residues C29 and C32.

It belongs to the thioredoxin family.

Its function is as follows. Component of the thioredoxin-thioredoxin reductase system. Participates in various redox reactions through the reversible oxidation of its active center dithiol to a disulfide and catalyzes dithiol-disulfide exchange reactions. The sequence is that of Thioredoxin (trxA) from Staphylococcus saprophyticus subsp. saprophyticus (strain ATCC 15305 / DSM 20229 / NCIMB 8711 / NCTC 7292 / S-41).